We begin with the raw amino-acid sequence, 293 residues long: L-ornithine N(alpha)-acyltransferase (293 aa).

It belongs to the acetyltransferase family. OlsB subfamily.

The enzyme catalyses a (3R)-hydroxyacyl-[ACP] + L-ornithine = a lyso-ornithine lipid + holo-[ACP] + H(+). Its pathway is lipid metabolism. Catalyzes the first step in the biosynthesis of ornithine lipids, which are phosphorus-free membrane lipids. Catalyzes the 3-hydroxyacyl-acyl carrier protein-dependent acylation of ornithine to form lyso-ornithine lipid (LOL). In Agrobacterium fabrum (strain C58 / ATCC 33970) (Agrobacterium tumefaciens (strain C58)), this protein is L-ornithine N(alpha)-acyltransferase.